The following is a 223-amino-acid chain: Ribose-5-phosphate isomerase A (223 aa).

Substrate is bound by residues 32 to 35 (TGST), 85 to 88 (DGAD), and 98 to 101 (KGGG). The active-site Proton acceptor is glutamate 107. Lysine 125 serves as a coordination point for substrate.

This sequence belongs to the ribose 5-phosphate isomerase family. Homodimer.

It carries out the reaction aldehydo-D-ribose 5-phosphate = D-ribulose 5-phosphate. Its pathway is carbohydrate degradation; pentose phosphate pathway; D-ribose 5-phosphate from D-ribulose 5-phosphate (non-oxidative stage): step 1/1. Functionally, catalyzes the reversible conversion of ribose-5-phosphate to ribulose 5-phosphate. The protein is Ribose-5-phosphate isomerase A of Pseudomonas paraeruginosa (strain DSM 24068 / PA7) (Pseudomonas aeruginosa (strain PA7)).